The sequence spans 428 residues: D-amino acid dehydrogenase (428 aa).

Residue Val3–Tyr17 coordinates FAD.

Belongs to the DadA oxidoreductase family. FAD is required as a cofactor.

The catalysed reaction is a D-alpha-amino acid + A + H2O = a 2-oxocarboxylate + AH2 + NH4(+). Its pathway is amino-acid degradation; D-alanine degradation; NH(3) and pyruvate from D-alanine: step 1/1. Its function is as follows. Oxidative deamination of D-amino acids. The sequence is that of D-amino acid dehydrogenase from Burkholderia lata (strain ATCC 17760 / DSM 23089 / LMG 22485 / NCIMB 9086 / R18194 / 383).